A 940-amino-acid polypeptide reads, in one-letter code: Alanine--tRNA ligase (940 aa).

Zn(2+) is bound by residues His-581, His-585, Cys-683, and His-687.

The protein belongs to the class-II aminoacyl-tRNA synthetase family. The cofactor is Zn(2+).

The protein resides in the cytoplasm. The enzyme catalyses tRNA(Ala) + L-alanine + ATP = L-alanyl-tRNA(Ala) + AMP + diphosphate. Functionally, catalyzes the attachment of alanine to tRNA(Ala) in a two-step reaction: alanine is first activated by ATP to form Ala-AMP and then transferred to the acceptor end of tRNA(Ala). Also edits incorrectly charged Ser-tRNA(Ala) and Gly-tRNA(Ala) via its editing domain. In Leptospira borgpetersenii serovar Hardjo-bovis (strain L550), this protein is Alanine--tRNA ligase.